The chain runs to 133 residues: Ribosome-binding factor A (133 aa).

This sequence belongs to the RbfA family. Monomer. Binds 30S ribosomal subunits, but not 50S ribosomal subunits or 70S ribosomes.

Its subcellular location is the cytoplasm. One of several proteins that assist in the late maturation steps of the functional core of the 30S ribosomal subunit. Associates with free 30S ribosomal subunits (but not with 30S subunits that are part of 70S ribosomes or polysomes). Required for efficient processing of 16S rRNA. May interact with the 5'-terminal helix region of 16S rRNA. In Nostoc sp. (strain PCC 7120 / SAG 25.82 / UTEX 2576), this protein is Ribosome-binding factor A.